The following is an 83-amino-acid chain: Cytochrome b559 subunit alpha (83 aa).

The helical transmembrane segment at 21–35 (VIHSITIPSLFIAGW) threads the bilayer. A heme-binding site is contributed by H23.

This sequence belongs to the PsbE/PsbF family. In terms of assembly, heterodimer of an alpha subunit and a beta subunit. PSII is composed of 1 copy each of membrane proteins PsbA, PsbB, PsbC, PsbD, PsbE, PsbF, PsbH, PsbI, PsbJ, PsbK, PsbL, PsbM, PsbT, PsbX, PsbY, PsbZ, Psb30/Ycf12, at least 3 peripheral proteins of the oxygen-evolving complex and a large number of cofactors. It forms dimeric complexes. Heme b serves as cofactor.

Its subcellular location is the plastid. The protein resides in the chloroplast thylakoid membrane. In terms of biological role, this b-type cytochrome is tightly associated with the reaction center of photosystem II (PSII). PSII is a light-driven water:plastoquinone oxidoreductase that uses light energy to abstract electrons from H(2)O, generating O(2) and a proton gradient subsequently used for ATP formation. It consists of a core antenna complex that captures photons, and an electron transfer chain that converts photonic excitation into a charge separation. This chain is Cytochrome b559 subunit alpha, found in Piper cenocladum (Ant piper).